A 301-amino-acid polypeptide reads, in one-letter code: Phosphoribosylaminoimidazole-succinocarboxamide synthase (301 aa).

Belongs to the SAICAR synthetase family.

It carries out the reaction 5-amino-1-(5-phospho-D-ribosyl)imidazole-4-carboxylate + L-aspartate + ATP = (2S)-2-[5-amino-1-(5-phospho-beta-D-ribosyl)imidazole-4-carboxamido]succinate + ADP + phosphate + 2 H(+). Its pathway is purine metabolism; IMP biosynthesis via de novo pathway; 5-amino-1-(5-phospho-D-ribosyl)imidazole-4-carboxamide from 5-amino-1-(5-phospho-D-ribosyl)imidazole-4-carboxylate: step 1/2. The sequence is that of Phosphoribosylaminoimidazole-succinocarboxamide synthase (ADE1) from Cyberlindnera jadinii (Torula yeast).